The chain runs to 158 residues: 2-C-methyl-D-erythritol 2,4-cyclodiphosphate synthase (158 aa).

A divalent metal cation-binding residues include D9 and H11. Residues 9-11 and 35-36 contribute to the 4-CDP-2-C-methyl-D-erythritol 2-phosphate site; these read DVH and HS. Position 43 (H43) interacts with a divalent metal cation. 4-CDP-2-C-methyl-D-erythritol 2-phosphate is bound by residues 57–59, 62–66, 101–107, 133–136, F140, and R143; these read DIG, FPDTD, AQAPKMA, and TTTE.

It belongs to the IspF family. Homotrimer. Requires a divalent metal cation as cofactor.

It carries out the reaction 4-CDP-2-C-methyl-D-erythritol 2-phosphate = 2-C-methyl-D-erythritol 2,4-cyclic diphosphate + CMP. The protein operates within isoprenoid biosynthesis; isopentenyl diphosphate biosynthesis via DXP pathway; isopentenyl diphosphate from 1-deoxy-D-xylulose 5-phosphate: step 4/6. Involved in the biosynthesis of isopentenyl diphosphate (IPP) and dimethylallyl diphosphate (DMAPP), two major building blocks of isoprenoid compounds. Catalyzes the conversion of 4-diphosphocytidyl-2-C-methyl-D-erythritol 2-phosphate (CDP-ME2P) to 2-C-methyl-D-erythritol 2,4-cyclodiphosphate (ME-CPP) with a corresponding release of cytidine 5-monophosphate (CMP). In Vibrio campbellii (strain ATCC BAA-1116), this protein is 2-C-methyl-D-erythritol 2,4-cyclodiphosphate synthase.